We begin with the raw amino-acid sequence, 467 residues long: Histidine--tRNA ligase (467 aa).

This sequence belongs to the class-II aminoacyl-tRNA synthetase family. In terms of assembly, homodimer.

It localises to the cytoplasm. It catalyses the reaction tRNA(His) + L-histidine + ATP = L-histidyl-tRNA(His) + AMP + diphosphate + H(+). In Gloeobacter violaceus (strain ATCC 29082 / PCC 7421), this protein is Histidine--tRNA ligase.